We begin with the raw amino-acid sequence, 548 residues long: Eukaryotic translation initiation factor 3 subunit D (548 aa).

At Lys53 the chain carries N6-acetyllysine. Ser161 bears the Phosphoserine mark. The RNA gate stretch occupies residues 285 to 299 (DFDLLTVSETANEPP). The interval 523-548 (PDGTFSSDEDDEEEEEEEEEEEEEEA) is disordered. Phosphoserine is present on residues Ser528 and Ser529. A compositionally biased stretch (acidic residues) spans 529-548 (SDEDDEEEEEEEEEEEEEEA).

This sequence belongs to the eIF-3 subunit D family. Component of the eukaryotic translation initiation factor 3 (eIF-3) complex, which is composed of 13 subunits: EIF3A, EIF3B, EIF3C, EIF3D, EIF3E, EIF3F, EIF3G, EIF3H, EIF3I, EIF3J, EIF3K, EIF3L and EIF3M. The eIF-3 complex appears to include 3 stable modules: module A is composed of EIF3A, EIF3B, EIF3G and EIF3I; module B is composed of EIF3F, EIF3H, and EIF3M; and module C is composed of EIF3C, EIF3D, EIF3E, EIF3K and EIF3L. EIF3C of module C binds EIF3B of module A and EIF3H of module B, thereby linking the three modules. EIF3J is a labile subunit that binds to the eIF-3 complex via EIF3B. The eIF-3 complex interacts with RPS6KB1 under conditions of nutrient depletion. Mitogenic stimulation leads to binding and activation of a complex composed of MTOR and RPTOR, leading to phosphorylation and release of RPS6KB1 and binding of EIF4B to eIF-3.

The protein resides in the cytoplasm. Its function is as follows. mRNA cap-binding component of the eukaryotic translation initiation factor 3 (eIF-3) complex, a complex required for several steps in the initiation of protein synthesis of a specialized repertoire of mRNAs. The eIF-3 complex associates with the 40S ribosome and facilitates the recruitment of eIF-1, eIF-1A, eIF-2:GTP:methionyl-tRNAi and eIF-5 to form the 43S pre-initiation complex (43S PIC). The eIF-3 complex stimulates mRNA recruitment to the 43S PIC and scanning of the mRNA for AUG recognition. The eIF-3 complex is also required for disassembly and recycling of post-termination ribosomal complexes and subsequently prevents premature joining of the 40S and 60S ribosomal subunits prior to initiation. The eIF-3 complex specifically targets and initiates translation of a subset of mRNAs involved in cell proliferation, including cell cycling, differentiation and apoptosis, and uses different modes of RNA stem-loop binding to exert either translational activation or repression. In the eIF-3 complex, EIF3D specifically recognizes and binds the 7-methylguanosine cap of a subset of mRNAs. This Bos taurus (Bovine) protein is Eukaryotic translation initiation factor 3 subunit D.